The primary structure comprises 898 residues: Phosphoenolpyruvate carboxylase (898 aa).

Catalysis depends on residues histidine 138 and lysine 561.

It belongs to the PEPCase type 1 family. It depends on Mg(2+) as a cofactor.

The catalysed reaction is oxaloacetate + phosphate = phosphoenolpyruvate + hydrogencarbonate. Forms oxaloacetate, a four-carbon dicarboxylic acid source for the tricarboxylic acid cycle. The sequence is that of Phosphoenolpyruvate carboxylase from Streptococcus pneumoniae serotype 2 (strain D39 / NCTC 7466).